Here is a 176-residue protein sequence, read N- to C-terminus: Nucleoside triphosphate/diphosphate phosphatase (176 aa).

Arginine 23 (proton donor) is an active-site residue. Asparagine 87, aspartate 103, aspartate 105, aspartate 107, aspartate 120, and glutamate 123 together coordinate Mg(2+).

It belongs to the Ntdp family. Mg(2+) serves as cofactor.

The enzyme catalyses a ribonucleoside 5'-triphosphate + H2O = a ribonucleoside 5'-diphosphate + phosphate + H(+). It carries out the reaction a ribonucleoside 5'-diphosphate + H2O = a ribonucleoside 5'-phosphate + phosphate + H(+). Functionally, has nucleoside phosphatase activity towards nucleoside triphosphates and nucleoside diphosphates. This Bacillus cereus (strain G9842) protein is Nucleoside triphosphate/diphosphate phosphatase.